The sequence spans 78 residues: Acyl carrier protein (78 aa).

The 76-residue stretch at 1–76 (MALFEDIQAV…DVVKYIEDNK (76 aa)) folds into the Carrier domain. O-(pantetheine 4'-phosphoryl)serine is present on serine 36.

Belongs to the acyl carrier protein (ACP) family. Post-translationally, 4'-phosphopantetheine is transferred from CoA to a specific serine of apo-ACP by AcpS. This modification is essential for activity because fatty acids are bound in thioester linkage to the sulfhydryl of the prosthetic group.

The protein resides in the cytoplasm. It functions in the pathway lipid metabolism; fatty acid biosynthesis. Carrier of the growing fatty acid chain in fatty acid biosynthesis. This Helicobacter pylori (strain Shi470) protein is Acyl carrier protein.